The sequence spans 252 residues: Imidazole glycerol phosphate synthase subunit HisF (252 aa).

Catalysis depends on residues Asp11 and Asp130.

The protein belongs to the HisA/HisF family. As to quaternary structure, heterodimer of HisH and HisF.

Its subcellular location is the cytoplasm. It catalyses the reaction 5-[(5-phospho-1-deoxy-D-ribulos-1-ylimino)methylamino]-1-(5-phospho-beta-D-ribosyl)imidazole-4-carboxamide + L-glutamine = D-erythro-1-(imidazol-4-yl)glycerol 3-phosphate + 5-amino-1-(5-phospho-beta-D-ribosyl)imidazole-4-carboxamide + L-glutamate + H(+). Its pathway is amino-acid biosynthesis; L-histidine biosynthesis; L-histidine from 5-phospho-alpha-D-ribose 1-diphosphate: step 5/9. IGPS catalyzes the conversion of PRFAR and glutamine to IGP, AICAR and glutamate. The HisF subunit catalyzes the cyclization activity that produces IGP and AICAR from PRFAR using the ammonia provided by the HisH subunit. The polypeptide is Imidazole glycerol phosphate synthase subunit HisF (Rhodospirillum rubrum (strain ATCC 11170 / ATH 1.1.1 / DSM 467 / LMG 4362 / NCIMB 8255 / S1)).